The chain runs to 235 residues: Small ribosomal subunit protein uS3 (235 aa).

A KH type-2 domain is found at valine 39 to lysine 107. Residues glutamine 216–lysine 235 are disordered.

This sequence belongs to the universal ribosomal protein uS3 family. In terms of assembly, part of the 30S ribosomal subunit. Forms a tight complex with proteins S10 and S14.

Binds the lower part of the 30S subunit head. Binds mRNA in the 70S ribosome, positioning it for translation. In Aggregatibacter actinomycetemcomitans (Actinobacillus actinomycetemcomitans), this protein is Small ribosomal subunit protein uS3.